The primary structure comprises 580 residues: Microcin-J25 export ATP-binding/permease protein McjD (580 aa).

The next 6 membrane-spanning stretches (helical) occupy residues 25-45 (FFSMLFITSLSSIIISISPLI), 66-86 (VLLACLYMFCVISNKASVFLF), 143-163 (VSQNILSPVIQLISTIVVVLS), 167-187 (WFSAGVFFLYILVFVIFNTRL), 261-281 (AVILFGSVFIYNILGVLNGVV), and 286-306 (FIMITSYIILLSTPVENIGAL). An ABC transmembrane type-1 domain is found at 25 to 312 (FFSMLFITSL…IGALLSEIRQ (288 aa)). An ABC transporter domain is found at 345 to 578 (LSIRELSFSY…NEYISGLASV (234 aa)). 378–385 (GPSGSGKS) contacts ATP.

The protein belongs to the ABC transporter superfamily. In terms of assembly, homodimer.

The protein resides in the cell inner membrane. Its function is as follows. Is able to protect a cell, which harbors the plasmid pTUC100 encoding microcin J25, against microcin J25. Is required for microcin J25 export out of the producing cells. The protein is Microcin-J25 export ATP-binding/permease protein McjD (mcjD) of Escherichia coli.